A 209-amino-acid chain; its full sequence is Bilin biosynthesis protein RpcF (209 aa).

It belongs to the CpcE/RpcE/PecE family.

Functionally, an enzyme involved in the biosynthesis of bilin. Might be involved in the specific attachment of phycoerythrobilin (PEB) to the R-phycocyanin II alpha chain. In Synechococcus sp. (strain WH8020), this protein is Bilin biosynthesis protein RpcF (rpcF).